A 377-amino-acid polypeptide reads, in one-letter code: Glycine oxidase (377 aa).

Residues 14–15 (VI), 34–35 (EK), 42–43 (AS), 47–49 (AGM), and Val180 contribute to the FAD site. Residues Arg309 and Arg336 each coordinate substrate. 334 to 340 (HYRNGIL) is a binding site for FAD.

Belongs to the DAO family. ThiO subfamily. Homotetramer. FAD serves as cofactor.

It catalyses the reaction glycine + O2 + H2O = glyoxylate + H2O2 + NH4(+). It carries out the reaction N-ethylglycine + O2 + H2O = ethylamine + glyoxylate + H2O2. The catalysed reaction is sarcosine + O2 + H2O = methylamine + glyoxylate + H2O2. The enzyme catalyses D-alanine + O2 + H2O = pyruvate + H2O2 + NH4(+). It participates in cofactor biosynthesis; thiamine diphosphate biosynthesis. Is inhibited at high substrate concentration. Functionally, catalyzes the FAD-dependent oxidative deamination of various amines and D-amino acids to yield the corresponding alpha-keto acids, ammonia/amine, and hydrogen peroxide. Oxidizes glycine, sarcosine (N-methylglycine), N-ethylglycine, D-proline, D-alanine, glycine-ethyl ester, and some other D-amino acids. Does not act on L-proline. Is essential for thiamine biosynthesis since the oxidation of glycine catalyzed by ThiO generates the glycine imine intermediate (dehydroglycine) required for the biosynthesis of the thiazole ring of thiamine pyrophosphate. The sequence is that of Glycine oxidase from Geobacillus kaustophilus (strain HTA426).